The chain runs to 266 residues: Leucine-rich repeat-containing protein 3 (266 aa).

The first 38 residues, 1–38, serve as a signal peptide directing secretion; that stretch reads MTFPAGAYVLRKVFIPHGCPLIFRLLLAVICLSVPSFA. The 32-residue stretch at 39–70 folds into the LRRNT domain; it reads CPKSCHCSERNSLTVVQCSSRNLEEIPPDLPH. LRR repeat units follow at residues 71-92, 95-116, and 120-141; these read DTVS…AFKN, WLQE…AFKG, and SLRT…AFAR. The 54-residue stretch at 151 to 204 folds into the LRRCT domain; sequence NPWHCECTLQEVLRELRLDPETVNEVSCHTSDQEKYAGKPVIQVLDSGINFCNF. A helical membrane pass occupies residues 211–231; sequence VAMFVTMFGWFTMVIAYVIYY.

Belongs to the LRRC3 family.

The protein resides in the membrane. The chain is Leucine-rich repeat-containing protein 3 (lrrc3) from Danio rerio (Zebrafish).